Consider the following 218-residue polypeptide: Thiamine-phosphate synthase (218 aa).

Residues 43–47 and asparagine 75 contribute to the 4-amino-2-methyl-5-(diphosphooxymethyl)pyrimidine site; that span reads QLRDK. Aspartate 76 and aspartate 95 together coordinate Mg(2+). Serine 114 contributes to the 4-amino-2-methyl-5-(diphosphooxymethyl)pyrimidine binding site. 141–143 lines the 2-[(2R,5Z)-2-carboxy-4-methylthiazol-5(2H)-ylidene]ethyl phosphate pocket; the sequence is TPT. Residue lysine 144 participates in 4-amino-2-methyl-5-(diphosphooxymethyl)pyrimidine binding. 2-[(2R,5Z)-2-carboxy-4-methylthiazol-5(2H)-ylidene]ethyl phosphate is bound at residue glycine 172.

It belongs to the thiamine-phosphate synthase family. Mg(2+) serves as cofactor.

The enzyme catalyses 2-[(2R,5Z)-2-carboxy-4-methylthiazol-5(2H)-ylidene]ethyl phosphate + 4-amino-2-methyl-5-(diphosphooxymethyl)pyrimidine + 2 H(+) = thiamine phosphate + CO2 + diphosphate. It catalyses the reaction 2-(2-carboxy-4-methylthiazol-5-yl)ethyl phosphate + 4-amino-2-methyl-5-(diphosphooxymethyl)pyrimidine + 2 H(+) = thiamine phosphate + CO2 + diphosphate. The catalysed reaction is 4-methyl-5-(2-phosphooxyethyl)-thiazole + 4-amino-2-methyl-5-(diphosphooxymethyl)pyrimidine + H(+) = thiamine phosphate + diphosphate. It participates in cofactor biosynthesis; thiamine diphosphate biosynthesis; thiamine phosphate from 4-amino-2-methyl-5-diphosphomethylpyrimidine and 4-methyl-5-(2-phosphoethyl)-thiazole: step 1/1. Functionally, condenses 4-methyl-5-(beta-hydroxyethyl)thiazole monophosphate (THZ-P) and 2-methyl-4-amino-5-hydroxymethyl pyrimidine pyrophosphate (HMP-PP) to form thiamine monophosphate (TMP). This is Thiamine-phosphate synthase from Thermobifida fusca (strain YX).